Here is an 88-residue protein sequence, read N- to C-terminus: N-alpha-acetyltransferase 38, NatC auxiliary subunit (88 aa).

Positions 1–72 constitute a Sm domain; that stretch reads MDILKLSDFI…VKTIMIDKPV (72 aa).

In terms of assembly, component of the N-terminal acetyltransferase C (NatC) complex, composed of the catalytic subunit Naa30/MAK3, a large auxiliary subunit Naa35/MAK10 and a small auxiliary subunit Naa38/MAK31.

Component of the NatC N-terminal acetyltransferase, which associates with the ribosome to acetylate nascent protein chains in a cotranslational manner. NatC acetylates protein N-termini starting with methionine, followed by a hydrophobic or amphipathic amino acid, with amino acids at positions 3 and 4 also contributing to NatC recognition. The first 4 amino acids of cognate substrates are recognized at the Naa30/MAK3-Naa35/MAK10 interface. NatC-dependent acetylation targets various substrate proteins to specific subcellular sites, including isoform 2 of tRNA-specific methyltransferase Trm1 to the inner nuclear membrane. Catalyzes the acetylation of the N-terminal Met of ARF-like GTPase ARL3, which is required for its Golgi localization via interaction with the Golgi-localized integral membrane protein SYS1, which may serve as a receptor for acetylated ARL3. Catalyzes the acetylation of the N-terminal Met of L-A virus Gag protein. MAK31 is necessary for the structural stability of L-A double-stranded RNA-containing particles. Necessary for growth at 37 degrees Celsius as well as for maintenance of the killer plasmid. The protein is N-alpha-acetyltransferase 38, NatC auxiliary subunit (MAK31) of Saccharomyces cerevisiae (strain ATCC 204508 / S288c) (Baker's yeast).